A 462-amino-acid polypeptide reads, in one-letter code: Glycine--tRNA ligase (462 aa).

2 residues coordinate substrate: Arg100 and Glu175. ATP-binding positions include 207-209 (RNE), 217-222 (FRTREF), 291-292 (EL), and 335-338 (GADR). 222-226 (FEQME) is a substrate binding site. 331-335 (EPSLG) provides a ligand contact to substrate.

The protein belongs to the class-II aminoacyl-tRNA synthetase family. Homodimer.

The protein resides in the cytoplasm. It catalyses the reaction tRNA(Gly) + glycine + ATP = glycyl-tRNA(Gly) + AMP + diphosphate. Catalyzes the attachment of glycine to tRNA(Gly). This is Glycine--tRNA ligase from Clostridium acetobutylicum (strain ATCC 824 / DSM 792 / JCM 1419 / IAM 19013 / LMG 5710 / NBRC 13948 / NRRL B-527 / VKM B-1787 / 2291 / W).